Consider the following 2909-residue polypeptide: Micronemal protein 15 (2909 aa).

An N-terminal signal peptide occupies residues 1–29 (MVFRATREPFRLPLVAAFIALFLLKGVTC). N-linked (GlcNAc...) asparagine glycosylation is found at N512, N563, N792, N813, N986, N1007, N1057, N1142, N1319, N1395, and N1713. The 57-residue stretch at 1755-1811 (TAIVGEWGEWSACTGTCFSQWWTPKRTRTRLVLAELSHSQIPSVSETATCLDLPPCG) folds into the TSP type-1 1 domain. The interval 1937 to 2073 (RRKGIMSRRR…RSQARNQTPD (137 aa)) is disordered. A compositionally biased stretch (polar residues) spans 1967 to 1977 (SEQSGKASQNG). An N-linked (GlcNAc...) asparagine glycan is attached at N1976. The segment covering 1978-1988 (SRRHRASRKQK) has biased composition (basic residues). Positions 2004–2016 (GESTLHGTGTNAY) are enriched in polar residues. A compositionally biased stretch (basic residues) spans 2049–2065 (KARRARRGAGRFRKSRS). Residue N2333 is glycosylated (N-linked (GlcNAc...) asparagine). Residues 2484–2549 (TCDYTEWSEW…EKCDWMPVCP (66 aa)) form the TSP type-1 2 domain. 3 disulfide bridges follow: C2485-C2528, C2496-C2500, and C2542-C2548. A disordered region spans residues 2552-2587 (EGEEEDDATGGVEPRGEPIVPPWSPERPTDENNQAM). N-linked (GlcNAc...) asparagine glycosylation occurs at N2706. A helical membrane pass occupies residues 2709 to 2729 (TWVICLLLGVGGGICFVLSCV). N2751, N2768, and N2793 each carry an N-linked (GlcNAc...) asparagine glycan. Positions 2759-2846 (ESHKLRRQGN…IGQTSPTQQR (88 aa)) are disordered. A compositionally biased stretch (acidic residues) spans 2801–2815 (PEEEPWQFEDRDEEP). Residues 2837–2846 (IGQTSPTQQR) show a composition bias toward polar residues.

Component of a complex, at least composed of cysteine repeat modular protein A (CRMPa), cysteine repeat modular protein B (CRMPb), micronemal protein 15 (MIC15) and thrombospondin type 1 domain-containing protein (TSP1).

The protein localises to the membrane. In terms of biological role, required for rhoptry secretion. Plays a role in host cell invasion. This Toxoplasma gondii protein is Micronemal protein 15.